We begin with the raw amino-acid sequence, 163 residues long: Glyoxalase domain-containing protein 5 (163 aa).

Positions 41 to 161 (HLDHLVLTVR…DDNLIEVSNY (121 aa)) constitute a VOC domain.

Belongs to the glyoxalase I family.

The sequence is that of Glyoxalase domain-containing protein 5 (glod5) from Danio rerio (Zebrafish).